Reading from the N-terminus, the 212-residue chain is Peptide methionine sulfoxide reductase MsrA (212 aa).

C52 is an active-site residue.

It belongs to the MsrA Met sulfoxide reductase family.

It catalyses the reaction L-methionyl-[protein] + [thioredoxin]-disulfide + H2O = L-methionyl-(S)-S-oxide-[protein] + [thioredoxin]-dithiol. It carries out the reaction [thioredoxin]-disulfide + L-methionine + H2O = L-methionine (S)-S-oxide + [thioredoxin]-dithiol. Functionally, has an important function as a repair enzyme for proteins that have been inactivated by oxidation. Catalyzes the reversible oxidation-reduction of methionine sulfoxide in proteins to methionine. The protein is Peptide methionine sulfoxide reductase MsrA of Yersinia enterocolitica serotype O:8 / biotype 1B (strain NCTC 13174 / 8081).